Consider the following 292-residue polypeptide: Elongation factor Ts (292 aa).

Residues 79-82 form an involved in Mg(2+) ion dislocation from EF-Tu region; it reads TDFV.

This sequence belongs to the EF-Ts family.

Its subcellular location is the cytoplasm. In terms of biological role, associates with the EF-Tu.GDP complex and induces the exchange of GDP to GTP. It remains bound to the aminoacyl-tRNA.EF-Tu.GTP complex up to the GTP hydrolysis stage on the ribosome. In Xanthomonas oryzae pv. oryzae (strain MAFF 311018), this protein is Elongation factor Ts.